Consider the following 999-residue polypeptide: RING finger domain and kelch repeat-containing protein DDB_G0271372 (999 aa).

The RING-type zinc-finger motif lies at 7-49; it reads CPNCLKVFNNPRQLECDHILCTRCIEGVYNPGRTPIIKCPVCD. Low complexity predominate over residues 92 to 143; it reads STGSSNNNNNNNNNNNNNNNNFVINNSNNKNNGATTTTTTTTTTTNSNSNST. 2 disordered regions span residues 92–147 and 159–209; these read STGS…KSKV and ASPK…SSPP. The span at 165-196 shows a compositional bias: polar residues; that stretch reads GSSQGSLTTINNQKKLTLSPQRASSTTTTSVN. The segment at 258-302 adopts a B box-type zinc-finger fold; it reads AELSKCNDHDQKKFTIFCTDCDQLLCDECLNNNQQQHENHQLNKI. Zn(2+)-binding residues include Cys-263, His-266, Cys-286, and His-294. Residues 355–402 adopt a coiled-coil conformation; the sequence is DIDTMIENLKERKNALISQIDKEYEEQKLELKDQIETINTTIVDIQNN. Low complexity-rich tracts occupy residues 485 to 516 and 526 to 536; these read GVSS…IITT and SPSPTSSSSST. The tract at residues 485 to 637 is disordered; the sequence is GVSSSPTGTG…TSTNGSNTKI (153 aa). Polar residues predominate over residues 552–612; it reads LSSQNYDNFG…SHGSKLNDNI (61 aa). Low complexity predominate over residues 613–635; it reads NTNNNNSPSPTSSSTTSTNGSNT. Kelch repeat units lie at residues 655-700, 702-745, 748-793, 796-842, and 844-892; these read ITAR…YDNN, TIYR…VFDG, YIYL…YHPT, CIYV…FDGS, and YINI…SMNL. Residues 904–924 show a composition bias toward low complexity; it reads NSFSSISSHSSLNSSSSNNGI. Positions 904-936 are disordered; sequence NSFSSISSHSSLNSSSSNNGISGSGGSGGDNEI.

The polypeptide is RING finger domain and kelch repeat-containing protein DDB_G0271372 (Dictyostelium discoideum (Social amoeba)).